We begin with the raw amino-acid sequence, 399 residues long: MAKLTVKDVELKGKKVLVRVDFNVPVKDGVITNDNRITAALPTIKYILEQGGRAILFSHLGRVKEEADKEGKSLAPVAADLAAKLGQDVKFIPGVTRGAELEAAVNALEDGQVLLVENTRFEDVDGKKESKNDPELGKYWASLGDGIFVNDAFGTAHRAHASNVGISANVEKAVAGFLLENEIAYIQEAVENPERPFVAILGGSKVSDKIGVIENLLEKADKVLIGGGMTYTFFKAQGIEIGNSLVEEDKLDVAKALLEKSNGKLILPVDSKEANAFADYTEVKYTEGEAIDPGFLGLDIGPKSIAKFDEALTGAKTVVWNGPMGVFENPDFQAGTIGVMDAIVKQPGVKSIIGGGDSAAAAINLGYADKFSWISTGGGASMELLEGKELPGLAALTEK.

Residues 21 to 23, Arg-36, 59 to 62, Arg-120, and Arg-158 each bind substrate; these read DFN and HLGR. ATP contacts are provided by residues Lys-209, Gly-297, Glu-328, and 355-358; that span reads GGDS.

This sequence belongs to the phosphoglycerate kinase family. Monomer.

The protein localises to the cytoplasm. The catalysed reaction is (2R)-3-phosphoglycerate + ATP = (2R)-3-phospho-glyceroyl phosphate + ADP. The protein operates within carbohydrate degradation; glycolysis; pyruvate from D-glyceraldehyde 3-phosphate: step 2/5. The protein is Phosphoglycerate kinase of Streptococcus thermophilus (strain ATCC BAA-491 / LMD-9).